The following is a 515-amino-acid chain: Sugar transport protein MST4 (515 aa).

Topologically, residues 1–17 (MAGGFSVSGSGVEFEAK) are cytoplasmic. The helical transmembrane segment at 18–38 (ITPIVIISCIMAATGGLMFGY) threads the bilayer. Over 39 to 78 (DVGISGGVTSMDDFLREFFPTVLKKKHEDKESNYCKYDNQ) the chain is Extracellular. Residues 79-99 (GLQLFTSSLYLAGLTATFFAS) form a helical membrane-spanning segment. Residues 100-108 (YTTRRLGRR) are Cytoplasmic-facing. The chain crosses the membrane as a helical span at residues 109–129 (LTMLIAGVFFIVGVIFNGAAQ). The Extracellular portion of the chain corresponds to 130–138 (NLAMLIVGR). The helical transmembrane segment at 139–159 (ILLGCGVGFANQAVPLFLSEI) threads the bilayer. At 160-165 (APTRIR) the chain is on the cytoplasmic side. Residues 166-186 (GGLNILFQLNVTIGILFANLV) traverse the membrane as a helical segment. Residues 187–199 (NYGTAKIHPWGWR) are Extracellular-facing. A helical membrane pass occupies residues 200 to 220 (LSLSLAGIPAALLTLGALFVV). At 221 to 280 (DTPNSLIERGRLEEGKAVLRKIRGTDNVEPEFNEIVEASRVAQEVKHPFRNLLQRRNRPQ) the chain is on the cytoplasmic side. A helical transmembrane segment spans residues 281-301 (LVIAVLLQIFQQFTGINAIMF). Residues 302–315 (YAPVLFNTLGFKTD) lie on the Extracellular side of the membrane. Residues 316 to 336 (ASLYSAVITGAVNVLSTLVSV) traverse the membrane as a helical segment. Residues 337 to 347 (YSVDRVGRRML) are Cytoplasmic-facing. The helical transmembrane segment at 348–368 (LLEAGVQMFLSQVAIAVVLGI) threads the bilayer. Over 369 to 379 (KVTDRSDNLGH) the chain is Extracellular. A helical membrane pass occupies residues 380-400 (GWAIMVVVMVCTFVSSFAWSW). At 401-422 (GPLGWLIPSETFPLETRSAGQS) the chain is on the cytoplasmic side. Residues 423 to 443 (VTVCVNLLFTFVIAQAFLSML) form a helical membrane-spanning segment. Over 444–448 (CHLKY) the chain is Extracellular. The chain crosses the membrane as a helical span at residues 449-469 (AIFAFFSAWVVVMSLFVLFFL). Residues 470–515 (PETKNIPIEEMTERVWKQHWFWKRFMDDADKHHVVPNGGKSNGATV) are Cytoplasmic-facing.

It belongs to the major facilitator superfamily. Sugar transporter (TC 2.A.1.1) family. Expressed in roots, shoots, leaf blades, leaf sheaths, anthers, ovaries and embryos.

The protein localises to the membrane. In terms of biological role, mediates active uptake of hexoses by sugar:proton symport. Can transport glucose, fructose, mannose and galactose. Can transport xylose and ribose. This chain is Sugar transport protein MST4, found in Oryza sativa subsp. japonica (Rice).